A 101-amino-acid chain; its full sequence is Small ribosomal subunit protein uS14m (101 aa).

It belongs to the universal ribosomal protein uS14 family. As to quaternary structure, component of the mitochondrial ribosome small subunit (28S) which comprises a 12S rRNA and about 30 distinct proteins. Interacts with LIAT1.

It localises to the mitochondrion. The chain is Small ribosomal subunit protein uS14m (mrps14) from Dictyostelium citrinum (Slime mold).